The primary structure comprises 447 residues: Ion-translocating oxidoreductase complex subunit C (447 aa).

4Fe-4S ferredoxin-type domains lie at 359 to 389 (AEVL…GRIA) and 399 to 430 (RCRE…LIRY). Cysteine 369, cysteine 372, cysteine 375, cysteine 379, cysteine 408, cysteine 411, cysteine 414, and cysteine 418 together coordinate [4Fe-4S] cluster.

Belongs to the 4Fe4S bacterial-type ferredoxin family. RnfC subfamily. The Rnf complex is probably composed of eight subunits, including RnfA, RnfB, RnfC, RnfD, RnfE and RnfG. It depends on [4Fe-4S] cluster as a cofactor.

Its subcellular location is the cell membrane. Part of a membrane-bound complex that couples electron transfer with translocation of ions across the membrane. Catalyzes Na(+) transport, most probably coupled to electron transfer from reduced ferredoxin to methanophenazine and heterodisulfide reductase. Involved in heterodisulfide reduction during methanogenesis from acetate. The polypeptide is Ion-translocating oxidoreductase complex subunit C (Methanosarcina acetivorans (strain ATCC 35395 / DSM 2834 / JCM 12185 / C2A)).